We begin with the raw amino-acid sequence, 25 residues long: Ocellatin-1 (25 aa).

A Valine amide modification is found at Val-25.

In terms of tissue distribution, expressed by the skin dorsal glands.

It localises to the secreted. Its function is as follows. Has hemolytic activity against human erythrocytes and antibacterial activity against the Gram-negative bacterium E.coli. This is Ocellatin-1 from Leptodactylus ocellatus (Argus frog).